The primary structure comprises 98 residues: DNA-binding protein Fis (98 aa).

The segment at residues 74–93 (QTRAALMMGINRGTLRKKLK) is a DNA-binding region (H-T-H motif).

Belongs to the transcriptional regulatory Fis family. As to quaternary structure, homodimer.

Activates ribosomal RNA transcription. Plays a direct role in upstream activation of rRNA promoters. In Enterobacter sp. (strain 638), this protein is DNA-binding protein Fis.